A 167-amino-acid chain; its full sequence is Ureidoglycolate lyase (167 aa).

The protein belongs to the ureidoglycolate lyase family. In terms of assembly, homodimer. It depends on Ni(2+) as a cofactor.

The enzyme catalyses (S)-ureidoglycolate = urea + glyoxylate. It functions in the pathway nitrogen metabolism; (S)-allantoin degradation. Its function is as follows. Catalyzes the catabolism of the allantoin degradation intermediate (S)-ureidoglycolate, generating urea and glyoxylate. Involved in the utilization of allantoin as nitrogen source. The protein is Ureidoglycolate lyase of Pseudomonas putida (strain ATCC 700007 / DSM 6899 / JCM 31910 / BCRC 17059 / LMG 24140 / F1).